The chain runs to 113 residues: MSIGIALATIAGGFLFPFAIRMMWGKMVDEWGAIGGWMAAAFIVGTVWTINHGIPKSMIYQSGTVWVDMAVAAGIGVFTASLLTGGKFSKSVVNLAAAVVGGVLGGFLLSLFL.

Transmembrane regions (helical) follow at residues 3 to 23, 30 to 50, 63 to 83, and 92 to 112; these read IGIA…IRMM, EWGA…VWTI, GTVW…ASLL, and VVNL…LSLF.

It is found in the membrane. Functionally, could be involved in the glycerol uptake either via facilitated diffusion or active transport. This chain is Putative glycerol transporter Lin0367, found in Listeria innocua serovar 6a (strain ATCC BAA-680 / CLIP 11262).